Here is a 241-residue protein sequence, read N- to C-terminus: Uridylate kinase (241 aa).

12 to 15 (KLSG) lines the ATP pocket. Residues 20–25 (GDKGTG) are involved in allosteric activation by GTP. G54 provides a ligand contact to UMP. Residues G55 and R59 each contribute to the ATP site. UMP contacts are provided by residues D74 and 135 to 142 (TGSPYFST). Positions 163, 169, and 172 each coordinate ATP.

It belongs to the UMP kinase family. As to quaternary structure, homohexamer.

It localises to the cytoplasm. It catalyses the reaction UMP + ATP = UDP + ADP. It functions in the pathway pyrimidine metabolism; CTP biosynthesis via de novo pathway; UDP from UMP (UMPK route): step 1/1. With respect to regulation, allosterically activated by GTP. Inhibited by UTP. Its function is as follows. Catalyzes the reversible phosphorylation of UMP to UDP. The protein is Uridylate kinase of Pediococcus pentosaceus (strain ATCC 25745 / CCUG 21536 / LMG 10740 / 183-1w).